The primary structure comprises 306 residues: Phenylcoumaran benzylic ether reductase POP1 (306 aa).

NADP(+)-binding positions include 9-15 (GGTGYIG), arginine 34, and lysine 43. Lysine 131 functions as the Proton acceptor in the catalytic mechanism. Arginine 135 contributes to the NADP(+) binding site.

The protein belongs to the NmrA-type oxidoreductase family. Isoflavone reductase subfamily.

It catalyses the reaction (-)-dehydrodiconiferyl alcohol + NADPH + H(+) = (S)-isodihydrodehydrodiconiferyl alcohol + NADP(+). The catalysed reaction is (+)-dehydrodiconiferyl alcohol + NADPH + H(+) = (R)-isodihydrodehydrodiconiferyl alcohol + NADP(+). It carries out the reaction (2R,3S)-dihydrodehydrodiconiferyl alcohol + NADPH + H(+) = (S)-tetrahydrodehydrodiconiferyl alcohol + NADP(+). The enzyme catalyses (2S,3R)-dihydrodehydrodiconiferyl alcohol + NADPH + H(+) = (R)-tetrahydrodehydrodiconiferyl alcohol + NADP(+). In terms of biological role, oxidoreductase involved in lignan biosynthesis. Catalyzes the NADPH-dependent reduction of phenylcoumaran benzylic ethers. Converts dehydrodiconiferyl alcohol (DDC) to isodihydrodehydrodiconiferyl alcohol (IDDDC), and dihydrodehydrodiconiferyl alcohol (DDDC) to tetrahydrodehydrodiconiferyl alcohol (TDDC). This is Phenylcoumaran benzylic ether reductase POP1 from Populus trichocarpa (Western balsam poplar).